The chain runs to 131 residues: MSWQAYVDDHLMCDIDGNRLTAAAILGQDGSVWSQSATFPAFRLEEIAAILKDFDQPGTLAPTGLFLGGTKYMVIQGEAGAVIRGKKGSGGIIVKKTNQALIIGIYDEPLTPGQCNMIVERLGDYLIEQGL.

Belongs to the profilin family. Occurs in many kinds of cells as a complex with monomeric actin in a 1:1 ratio.

The protein resides in the cytoplasm. It localises to the cytoskeleton. Functionally, binds to actin and affects the structure of the cytoskeleton. At high concentrations, profilin prevents the polymerization of actin, whereas it enhances it at low concentrations. By binding to PIP2, it inhibits the formation of IP3 and DG. This chain is Profilin, found in Citrus sinensis (Sweet orange).